Here is a 300-residue protein sequence, read N- to C-terminus: Solute carrier family 25 member 35 (300 aa).

Solcar repeat units follow at residues Met1 to Gly90, His100 to Leu193, and Gln203 to Leu294. A run of 6 helical transmembrane segments spans residues Thr38–Gly58, Leu59–Ile79, Gly91–Leu119, Ala169–Thr190, Trp205–Pro225, and Leu277–Lys300.

It belongs to the mitochondrial carrier (TC 2.A.29) family.

Its subcellular location is the mitochondrion inner membrane. It carries out the reaction a dicarboxylate(in) + sulfate(out) = a dicarboxylate(out) + sulfate(in). In terms of biological role, putative antiporter that exchanges dicarboxylates and sulfur oxoanions across the inner membrane of mitochondria. The sequence is that of Solute carrier family 25 member 35 (SLC25A35) from Homo sapiens (Human).